The following is a 381-amino-acid chain: Succinyl-diaminopimelate desuccinylase (381 aa).

H72 serves as a coordination point for Zn(2+). D74 is a catalytic residue. Zn(2+) is bound at residue D105. E139 functions as the Proton acceptor in the catalytic mechanism. Zn(2+) is bound by residues E140, E168, and H354.

The protein belongs to the peptidase M20A family. DapE subfamily. As to quaternary structure, homodimer. Requires Zn(2+) as cofactor. Co(2+) is required as a cofactor.

It carries out the reaction N-succinyl-(2S,6S)-2,6-diaminopimelate + H2O = (2S,6S)-2,6-diaminopimelate + succinate. It participates in amino-acid biosynthesis; L-lysine biosynthesis via DAP pathway; LL-2,6-diaminopimelate from (S)-tetrahydrodipicolinate (succinylase route): step 3/3. Functionally, catalyzes the hydrolysis of N-succinyl-L,L-diaminopimelic acid (SDAP), forming succinate and LL-2,6-diaminopimelate (DAP), an intermediate involved in the bacterial biosynthesis of lysine and meso-diaminopimelic acid, an essential component of bacterial cell walls. The sequence is that of Succinyl-diaminopimelate desuccinylase from Shewanella sp. (strain ANA-3).